Here is a 291-residue protein sequence, read N- to C-terminus: Kidney mitochondrial carrier protein 1 (291 aa).

At Ser2 the chain carries N-acetylserine. 3 Solcar repeats span residues 7–96, 104–189, and 198–289; these read KPFV…LKRL, ETLL…TKKH, and DTVS…LKKL. 6 helical membrane passes run 9–26, 71–89, 106–124, 164–183, 204–224, and 264–283; these read FVYG…TFPI, GIAP…KIGT, LLIN…SAIA, GVSL…LPVY, FLSS…VDVV, and GFWP…FLTY.

Belongs to the mitochondrial carrier (TC 2.A.29) family. In terms of assembly, interacts with VDAC1.

It localises to the mitochondrion inner membrane. It catalyses the reaction sulfite(in) + sulfate(out) = sulfite(out) + sulfate(in). The enzyme catalyses thiosulfate(in) + sulfate(out) = thiosulfate(out) + sulfate(in). The catalysed reaction is sulfate(out) + phosphate(in) = sulfate(in) + phosphate(out). It carries out the reaction oxalate(in) + sulfate(out) = oxalate(out) + sulfate(in). It catalyses the reaction malonate(in) + sulfate(out) = malonate(out) + sulfate(in). The enzyme catalyses maleate(in) + sulfate(out) = maleate(out) + sulfate(in). The catalysed reaction is (S)-malate(in) + sulfate(out) = (S)-malate(out) + sulfate(in). It carries out the reaction (3S)-citramalate(in) + sulfate(out) = (3S)-citramalate(out) + sulfate(in). It catalyses the reaction (3R)-citramalate(in) + sulfate(out) = (3R)-citramalate(out) + sulfate(in). The enzyme catalyses sulfate(out) + succinate(in) = sulfate(in) + succinate(out). The catalysed reaction is (S,S)-tartrate(in) + sulfate(out) = (S,S)-tartrate(out) + sulfate(in). It carries out the reaction (2R,3R)-tartrate(in) + sulfate(out) = (2R,3R)-tartrate(out) + sulfate(in). It catalyses the reaction D-aspartate(in) + sulfate(out) = D-aspartate(out) + sulfate(in). The enzyme catalyses L-aspartate(in) + sulfate(out) = L-aspartate(out) + sulfate(in). The catalysed reaction is sulfate(in) = sulfate(out). It carries out the reaction phosphate(in) = phosphate(out). It catalyses the reaction (S)-malate(out) = (S)-malate(in). Its function is as follows. Antiporter that transports inorganic anions (sulfate, sulfite, thiosulfate and phosphate) and, to a lesser extent, a variety of dicarboxylates (e.g. malonate, malate and citramalate) and, even more so, aspartate. The sulfate/sulfate exchange is much higher than the phosphate/phosphate and malate/malate exchanges. The transport affinities is higher for sulfate and thiosulfate than for any other substrate. May catalyze the export of sulfite and thiosulfate (the hydrogen sulfide degradation products) from the mitochondria, thereby modulating the level of the hydrogen sulfide. Also may mediate a very low unidirectional transport of sulfate, phosphate and (S)-malate. The sequence is that of Kidney mitochondrial carrier protein 1 from Rattus norvegicus (Rat).